Here is a 505-residue protein sequence, read N- to C-terminus: E3 SUMO-protein ligase PIAS4-A (505 aa).

One can recognise an SAP domain in the interval 12 to 46 (VKSFRVSDLQTLLASMGRSKSGLKQDLVGRALRLV). An LXXLL motif motif is present at residues 20–24 (LQTLL). Lys35 participates in a covalent cross-link: Glycyl lysine isopeptide (Lys-Gly) (interchain with G-Cter in SUMO); alternate. A Glycyl lysine isopeptide (Lys-Gly) (interchain with G-Cter in SUMO2); alternate cross-link involves residue Lys35. Residues Lys56 and Lys68 each participate in a glycyl lysine isopeptide (Lys-Gly) (interchain with G-Cter in SUMO2) cross-link. Positions 104–264 (GIPKPAPPPA…SVAVYLVRVF (161 aa)) constitute a PINIT domain. Residues 296 to 381 (PESEIATTGL…LKETPEDVEE (86 aa)) form an SP-RING-type zinc finger. Cys327, His329, Cys350, and Cys353 together coordinate Zn(2+). Residues 374-505 (ETPEDVEEIE…DYDKDLVTAY (132 aa)) are required for nuclear localization. Over residues 395-407 (DDKEKERERENSR) the composition is skewed to basic and acidic residues. Residues 395 to 505 (DDKEKERERE…DYDKDLVTAY (111 aa)) form a disordered region. A compositionally biased stretch (gly residues) spans 437-457 (SGSGGASAGTGSTSGGSGGGT). The span at 462–485 (TLDDSSEEEGGGGAEDSEETDDSQ) shows a compositional bias: acidic residues. The span at 493–505 (GRYDYDKDLVTAY) shows a compositional bias: basic and acidic residues.

This sequence belongs to the PIAS family. In terms of processing, sumoylated. Lys-35 is the main site of sumoylation. As to expression, highly expressed in spleen, liver, and brain. Expressed at lower levels in heart, intestine, kidney, gill, skin, and muscle.

It is found in the nucleus. It carries out the reaction S-ubiquitinyl-[E2 ubiquitin-conjugating enzyme]-L-cysteine + [acceptor protein]-L-lysine = [E2 ubiquitin-conjugating enzyme]-L-cysteine + N(6)-ubiquitinyl-[acceptor protein]-L-lysine.. It participates in protein modification; protein sumoylation. Functionally, functions as an E3-type small ubiquitin-like modifier (SUMO) ligase. May play a role as a transcriptional coregulator in various cellular pathways. Catalyzes conjugation of SUMO2 to KAT5 in response to DNA damage, facilitating repair of DNA double-strand breaks (DSBs) via homologous recombination (HR). Mediates sumoylation of PARP1 in response to PARP1 trapping to chromatin. Negatively regulates induction of interferon phi 1 (ifnphi1) mediated by mavs and ticam1/trif. Also inhibits ifnphi1-mediated activation of the interferon-stimulated genes (ISGs) pkz and cd40, and to a lesser extent rsad2 and isg15. May inhibit ticam1/trif-mediated activation of NF-kappa-B. The protein is E3 SUMO-protein ligase PIAS4-A of Danio rerio (Zebrafish).